The following is a 193-amino-acid chain: MRLTDIEIEQALDNGTIVIEPRPGIEAISGVSVDVRLGGQFRVFKDHTAPYIDLSGPSVEMQAALDRVMSEIIEIPDGEAFFLHPGELALAVTYESVTLPADIVGWLDGRSSLARLGLMVHVTAHRIDPGWQGKIVLEFYNSGKLPLALRPRMTIGALNFERLNHAVARPYNTRKSAKYKDQQEAVASRISQD.

Residues 110 to 115 (RSSLAR), D128, 136 to 138 (VLE), Y171, K178, and Q182 each bind dCTP. The Proton donor/acceptor role is filled by E138. The interval 174 to 193 (RKSAKYKDQQEAVASRISQD) is disordered.

This sequence belongs to the dCTP deaminase family. In terms of assembly, homotrimer.

The enzyme catalyses dCTP + H2O + H(+) = dUTP + NH4(+). Its pathway is pyrimidine metabolism; dUMP biosynthesis; dUMP from dCTP (dUTP route): step 1/2. Functionally, catalyzes the deamination of dCTP to dUTP. The protein is dCTP deaminase of Shewanella baltica (strain OS223).